The chain runs to 243 residues: UPF0502 protein Rmet_3697 (243 aa).

The segment covering 1-11 has biased composition (low complexity); sequence MTDTPDTPDTP. The tract at residues 1–23 is disordered; the sequence is MTDTPDTPDTPMATGASSRPPLR.

The protein belongs to the UPF0502 family.

This Cupriavidus metallidurans (strain ATCC 43123 / DSM 2839 / NBRC 102507 / CH34) (Ralstonia metallidurans) protein is UPF0502 protein Rmet_3697.